A 288-amino-acid polypeptide reads, in one-letter code: ATP synthase gamma chain (288 aa).

It belongs to the ATPase gamma chain family. In terms of assembly, F-type ATPases have 2 components, CF(1) - the catalytic core - and CF(0) - the membrane proton channel. CF(1) has five subunits: alpha(3), beta(3), gamma(1), delta(1), epsilon(1). CF(0) has three main subunits: a, b and c.

It localises to the cell membrane. Functionally, produces ATP from ADP in the presence of a proton gradient across the membrane. The gamma chain is believed to be important in regulating ATPase activity and the flow of protons through the CF(0) complex. This is ATP synthase gamma chain from Staphylococcus aureus (strain bovine RF122 / ET3-1).